The following is a 419-amino-acid chain: UDP-N-acetylglucosamine 1-carboxyvinyltransferase (419 aa).

22–23 (KN) contacts phosphoenolpyruvate. Arg-92 provides a ligand contact to UDP-N-acetyl-alpha-D-glucosamine. Cys-116 functions as the Proton donor in the catalytic mechanism. A 2-(S-cysteinyl)pyruvic acid O-phosphothioketal modification is found at Cys-116. UDP-N-acetyl-alpha-D-glucosamine-binding positions include 121 to 125 (RPIDL), Asp-306, and Ile-328.

Belongs to the EPSP synthase family. MurA subfamily.

The protein localises to the cytoplasm. The enzyme catalyses phosphoenolpyruvate + UDP-N-acetyl-alpha-D-glucosamine = UDP-N-acetyl-3-O-(1-carboxyvinyl)-alpha-D-glucosamine + phosphate. Its pathway is cell wall biogenesis; peptidoglycan biosynthesis. Cell wall formation. Adds enolpyruvyl to UDP-N-acetylglucosamine. Target for the antibiotic fosfomycin. This Streptococcus pneumoniae (strain Hungary19A-6) protein is UDP-N-acetylglucosamine 1-carboxyvinyltransferase.